We begin with the raw amino-acid sequence, 325 residues long: Ribosomal RNA small subunit methyltransferase H (325 aa).

S-adenosyl-L-methionine is bound by residues Gly32 to His34, Asp52, Phe79, Asp100, and Gln107.

It belongs to the methyltransferase superfamily. RsmH family.

The protein resides in the cytoplasm. The catalysed reaction is cytidine(1402) in 16S rRNA + S-adenosyl-L-methionine = N(4)-methylcytidine(1402) in 16S rRNA + S-adenosyl-L-homocysteine + H(+). Functionally, specifically methylates the N4 position of cytidine in position 1402 (C1402) of 16S rRNA. The protein is Ribosomal RNA small subunit methyltransferase H of Oceanobacillus iheyensis (strain DSM 14371 / CIP 107618 / JCM 11309 / KCTC 3954 / HTE831).